The following is a 189-amino-acid chain: Crossover junction endodeoxyribonuclease RuvC (189 aa).

Residues D8, E67, and D139 contribute to the active site. Positions 8, 67, and 139 each coordinate Mg(2+).

The protein belongs to the RuvC family. In terms of assembly, homodimer which binds Holliday junction (HJ) DNA. The HJ becomes 2-fold symmetrical on binding to RuvC with unstacked arms; it has a different conformation from HJ DNA in complex with RuvA. In the full resolvosome a probable DNA-RuvA(4)-RuvB(12)-RuvC(2) complex forms which resolves the HJ. It depends on Mg(2+) as a cofactor.

It localises to the cytoplasm. It catalyses the reaction Endonucleolytic cleavage at a junction such as a reciprocal single-stranded crossover between two homologous DNA duplexes (Holliday junction).. In terms of biological role, the RuvA-RuvB-RuvC complex processes Holliday junction (HJ) DNA during genetic recombination and DNA repair. Endonuclease that resolves HJ intermediates. Cleaves cruciform DNA by making single-stranded nicks across the HJ at symmetrical positions within the homologous arms, yielding a 5'-phosphate and a 3'-hydroxyl group; requires a central core of homology in the junction. The consensus cleavage sequence is 5'-(A/T)TT(C/G)-3'. Cleavage occurs on the 3'-side of the TT dinucleotide at the point of strand exchange. HJ branch migration catalyzed by RuvA-RuvB allows RuvC to scan DNA until it finds its consensus sequence, where it cleaves and resolves the cruciform DNA. The polypeptide is Crossover junction endodeoxyribonuclease RuvC (Histophilus somni (strain 129Pt) (Haemophilus somnus)).